A 95-amino-acid polypeptide reads, in one-letter code: Small ubiquitin-related modifier 4 (95 aa).

In terms of domain architecture, Ubiquitin-like spans 17-95 (HINLKVAGQD…VLQQQTGGVY (79 aa)). A Glycyl lysine isopeptide (Gly-Lys) (interchain with K-? in acceptor proteins) cross-link involves residue Gly-93. The propeptide occupies 94-95 (VY).

This sequence belongs to the ubiquitin family. SUMO subfamily. In terms of assembly, interacts with SAE2. Covalently attached to a number of proteins.

In terms of biological role, ubiquitin-like protein which can be covalently attached to target lysines as a monomer. Does not seem to be involved in protein degradation and may modulate protein subcellular localization, stability or activity. Upon oxidative stress, conjugates to various anti-oxidant enzymes, chaperones, and stress defense proteins. May also conjugate to NFKBIA, TFAP2A and FOS, negatively regulating their transcriptional activity, and to NR3C1, positively regulating its transcriptional activity. Covalent attachment to its substrates requires prior activation by the E1 complex SAE1-SAE2 and linkage to the E2 enzyme UBE2I. The polypeptide is Small ubiquitin-related modifier 4 (SUMO4) (Sus scrofa (Pig)).